We begin with the raw amino-acid sequence, 81 residues long: ATP synthase subunit c (81 aa).

Helical transmembrane passes span 4 to 24 (MIAQ…AIGA) and 57 to 77 (VGLV…FVFA).

It belongs to the ATPase C chain family. F-type ATPases have 2 components, F(1) - the catalytic core - and F(0) - the membrane proton channel. F(1) has five subunits: alpha(3), beta(3), gamma(1), delta(1), epsilon(1). F(0) has three main subunits: a(1), b(2) and c(10-14). The alpha and beta chains form an alternating ring which encloses part of the gamma chain. F(1) is attached to F(0) by a central stalk formed by the gamma and epsilon chains, while a peripheral stalk is formed by the delta and b chains.

The protein localises to the cell membrane. Its function is as follows. F(1)F(0) ATP synthase produces ATP from ADP in the presence of a proton or sodium gradient. F-type ATPases consist of two structural domains, F(1) containing the extramembraneous catalytic core and F(0) containing the membrane proton channel, linked together by a central stalk and a peripheral stalk. During catalysis, ATP synthesis in the catalytic domain of F(1) is coupled via a rotary mechanism of the central stalk subunits to proton translocation. In terms of biological role, key component of the F(0) channel; it plays a direct role in translocation across the membrane. A homomeric c-ring of between 10-14 subunits forms the central stalk rotor element with the F(1) delta and epsilon subunits. This chain is ATP synthase subunit c, found in Mycobacterium leprae (strain TN).